The following is a 520-amino-acid chain: MGKRQHQKDKMYITCAEYTHFYGGKKPDLPQTNFRRLPFDHCSLSLQPFVYPVCTPDGIVFDLLNIVPWLKKYGTNPSNGEKLDGRSLIKLNFSKNSEGKYHCPVLFTVFTNNTHIVAVRTTGNVYAYEAVEQLNIKAKNFRDLLTDEPFSRQDIITLQDPTNLDKFNVSNFYHVKNNMKIIDPDEEKAKQDPSYYLKNTNAETRETLQELYKEFKGDEILAATMKAPEKKKVDKLNAAHYSTGKVSASFTSTAMVPETTHEAAAIDEDVLRYQFVKKKGYVRLHTNKGDLNLELHCDLTPKTCENFIRLCKKHYYDGTIFHRSIRNFVIQGGDPTGTGTGGESYWGKPFKDEFRPNLSHTGRGILSMANSGPNSNRSQFFITFRSCAYLDKKHTIFGRVVGGFDVLTAMENVESDPKTDRPKEEIRIDATTVFVDPYEEADAQIAQERKTQLKVAPETKVKSSQPQAGSQGPQTFRQGVGKYINPAATKRAAEEEPSTSATVPMSKKKPSRGFGDFSSW.

Residues 35 to 108 form the U-box domain; it reads RRLPFDHCSL…GKYHCPVLFT (74 aa). Positions 197-217 form a coiled coil; that stretch reads LKNTNAETRETLQELYKEFKG. Lys216 participates in a covalent cross-link: Glycyl lysine isopeptide (Lys-Gly) (interchain with G-Cter in SUMO2). The PPIase cyclophilin-type domain occupies 278 to 433; that stretch reads KKGYVRLHTN…EEIRIDATTV (156 aa). The tract at residues 456 to 520 is disordered; that stretch reads APETKVKSSQ…SRGFGDFSSW (65 aa). Residues 463–474 are compositionally biased toward low complexity; the sequence is SSQPQAGSQGPQ. The residue at position 470 (Ser470) is a Phosphoserine. At Lys482 the chain carries N6-acetyllysine.

The protein belongs to the cyclophilin-type PPIase family. PPIL2 subfamily. As to quaternary structure, component of the minor spliceosome, which splices U12-type introns. Within this complex, interacts with PRPF8/PRP8, EFTUD2/SNU114 and PLRG1. Interacts with isoform 2 of BSG. Interacts (via the PPIase cyclophilin-type domain) with CRNKL1; they may form a trimeric complex with HSP90. In terms of tissue distribution, highest expression in thymus, pancreas and testis. Also detected in heart, placenta, lung, liver, skeletal muscle, kidney, spleen, prostate, ovary, small intestine and colon. Poorly detected in brain and leukocytes. Strong protein expression in lymph node (cortical, paracortical and medullar regions), thyroid (follicular epithelial cells), testis (developing spermatozoa), stomach (cells lining the gastric pit), pancreas, kidney (proximal and distal-tubule cells and collecting duct cells but not in glomeruli), endometrium and colon (goblet cells). Moderate protein expression in spleen, prostate (epithelium and squamous cell carcinomas), placenta and adrenal gland. Weak protein expression in liver, heart, breast, ovary, and lung. No protein expression in brain and bladder. High protein expression in most lymphomas and melanomas.

The protein resides in the nucleus. It catalyses the reaction S-ubiquitinyl-[E2 ubiquitin-conjugating enzyme]-L-cysteine + [acceptor protein]-L-lysine = [E2 ubiquitin-conjugating enzyme]-L-cysteine + N(6)-ubiquitinyl-[acceptor protein]-L-lysine.. It functions in the pathway protein modification; protein ubiquitination. In terms of biological role, has a ubiquitin-protein ligase activity acting as an E3 ubiquitin protein ligase or as an ubiquitin-ubiquitin ligase promoting elongation of ubiquitin chains on substrates. By mediating 'Lys-48'-linked polyubiquitination of proteins could target them for proteasomal degradation. May also function as a chaperone, playing a role in transport to the cell membrane of BSG/Basigin for instance. Probable inactive PPIase with no peptidyl-prolyl cis-trans isomerase activity. As a component of the minor spliceosome, involved in the splicing of U12-type introns in pre-mRNAs. The chain is RING-type E3 ubiquitin-protein ligase PPIL2 from Homo sapiens (Human).